The sequence spans 730 residues: Rap1 GTPase-activating protein 2 (730 aa).

The region spanning 247-463 (IVAYDEHEVN…RTRAALLDNL (217 aa)) is the Rap-GAP domain. Disordered stretches follow at residues 510–668 (MVGS…STAS) and 698–730 (SRSPTDIKNRNSPRSNLKFRFDKLSHGSSSTSH). Polar residues-rich tracts occupy residues 535–557 (GEVTKTTFSPPVSAATAKNQSRS) and 597–612 (HSSQEMKSETSSNPSS). Residues 617–630 (PNKDRPFVKLKENG) are compositionally biased toward basic and acidic residues. Low complexity predominate over residues 631–651 (RSNISRSSSSTSSFSSTAGES). Polar residues predominate over residues 699–712 (RSPTDIKNRNSPRS).

Its subcellular location is the cytoplasm. Functionally, GTPase activator for the nuclear Ras-related regulatory protein RAP-1A (KREV-1), converting it to the putatively inactive GDP-bound state. This chain is Rap1 GTPase-activating protein 2 (RAP1GAP2), found in Gallus gallus (Chicken).